A 382-amino-acid chain; its full sequence is Neuropeptide Y receptor type 1 (382 aa).

Over 1–33 the chain is Extracellular; that stretch reads MNSTSFSQVENHSIFCNFSENSQFLAFESDDCH. Residues N2, N11, and N17 are each glycosylated (N-linked (GlcNAc...) asparagine). Residues 34–54 traverse the membrane as a helical segment; sequence LPLAMIFTLALAYGAVIILGV. The Cytoplasmic segment spans residues 55–75; it reads TGNLALIMIILKQKEMRNVTN. Residues 76-96 traverse the membrane as a helical segment; the sequence is ILIVNLSFSDLLVAIMCLPFT. At 97–115 the chain is on the extracellular side; the sequence is FVYTLMDHWVFGEAMCKLN. C112 and C197 are joined by a disulfide. A helical transmembrane segment spans residues 116–136; the sequence is PFVQCVSITVSIFSLVLIAVE. The Cytoplasmic segment spans residues 137 to 153; the sequence is RHQLIINPRGWRPNNRH. Residues 154-174 form a helical membrane-spanning segment; sequence AYVGIAVIWVLAVVSSLPFLI. Over 175-210 the chain is Extracellular; that stretch reads YQVLTDEPFQNVTLDAFKDKYVCFDKFPSDSHRLSY. Residue N185 is glycosylated (N-linked (GlcNAc...) asparagine). Residues 211–231 traverse the membrane as a helical segment; that stretch reads TTLLLMLQYFGPLCFIFICYF. The Cytoplasmic portion of the chain corresponds to 232-259; sequence KIYIRLKRRNNMMDKMRDNKYRSSETKR. A helical membrane pass occupies residues 260–280; sequence INIMLLSIVVAFAVCWLPLTI. Residues 281 to 298 lie on the Extracellular side of the membrane; the sequence is FNTVFDWNHQIIATCNHN. The chain crosses the membrane as a helical span at residues 299–319; that stretch reads LLFLLCHLTAMISTCVNPIFY. Over 320 to 382 the chain is Cytoplasmic; the sequence is GFLNKNFQRD…KINNDDNEKI (63 aa). C337 carries S-palmitoyl cysteine lipidation. Residue S367 is modified to Phosphoserine.

This sequence belongs to the G-protein coupled receptor 1 family.

The protein resides in the cell membrane. Its function is as follows. Receptor for neuropeptide Y and peptide YY. The sequence is that of Neuropeptide Y receptor type 1 (NPY1R) from Canis lupus familiaris (Dog).